The following is a 254-amino-acid chain: 4-hydroxy-tetrahydrodipicolinate reductase (254 aa).

7-12 (GASGRI) is an NAD(+) binding site. Arginine 35 lines the NADP(+) pocket. NAD(+) contacts are provided by residues 91-93 (GTT) and 115-118 (AHNM). Residue histidine 147 is the Proton donor/acceptor of the active site. Residue histidine 148 coordinates (S)-2,3,4,5-tetrahydrodipicolinate. The active-site Proton donor is lysine 151. A (S)-2,3,4,5-tetrahydrodipicolinate-binding site is contributed by 157–158 (GT).

It belongs to the DapB family.

It is found in the cytoplasm. The catalysed reaction is (S)-2,3,4,5-tetrahydrodipicolinate + NAD(+) + H2O = (2S,4S)-4-hydroxy-2,3,4,5-tetrahydrodipicolinate + NADH + H(+). It carries out the reaction (S)-2,3,4,5-tetrahydrodipicolinate + NADP(+) + H2O = (2S,4S)-4-hydroxy-2,3,4,5-tetrahydrodipicolinate + NADPH + H(+). Its pathway is amino-acid biosynthesis; L-lysine biosynthesis via DAP pathway; (S)-tetrahydrodipicolinate from L-aspartate: step 4/4. Functionally, catalyzes the conversion of 4-hydroxy-tetrahydrodipicolinate (HTPA) to tetrahydrodipicolinate. The polypeptide is 4-hydroxy-tetrahydrodipicolinate reductase (Helicobacter pylori (strain Shi470)).